The primary structure comprises 396 residues: Ornithine aminotransferase (396 aa).

Lys-255 bears the N6-(pyridoxal phosphate)lysine mark.

It belongs to the class-III pyridoxal-phosphate-dependent aminotransferase family. OAT subfamily. It depends on pyridoxal 5'-phosphate as a cofactor.

The protein localises to the cytoplasm. It carries out the reaction a 2-oxocarboxylate + L-ornithine = L-glutamate 5-semialdehyde + an L-alpha-amino acid. The protein operates within amino-acid biosynthesis; L-proline biosynthesis; L-glutamate 5-semialdehyde from L-ornithine: step 1/1. Its function is as follows. Catalyzes the interconversion of ornithine to glutamate semialdehyde. This chain is Ornithine aminotransferase, found in Staphylococcus epidermidis (strain ATCC 12228 / FDA PCI 1200).